Here is a 125-residue protein sequence, read N- to C-terminus: Large ribosomal subunit protein uL22c (125 aa).

It belongs to the universal ribosomal protein uL22 family. In terms of assembly, part of the 50S ribosomal subunit.

It localises to the plastid. The protein resides in the chloroplast. This protein binds specifically to 23S rRNA. Its function is as follows. The globular domain of the protein is located near the polypeptide exit tunnel on the outside of the subunit, while an extended beta-hairpin is found that lines the wall of the exit tunnel in the center of the 70S ribosome. This chain is Large ribosomal subunit protein uL22c (rpl22), found in Huperzia lucidula (Shining clubmoss).